Reading from the N-terminus, the 160-residue chain is MKLEVLPLDQKTFSAYGDVIETQERDFFHINNGLVERYHDLAKVEVLEQDRTLISINRAQPAAMPIVVHELERHPLGTQAFVPMNGEAFVVIVALGDDKPELSTLRAFISNGRQGVNYHRNVWHHPLFAWQTVTDFLTVDRGGSDNCDVESIPTHELCFA.

It belongs to the ureidoglycolate lyase family. As to quaternary structure, homodimer. The cofactor is Ni(2+).

It carries out the reaction (S)-ureidoglycolate = urea + glyoxylate. It functions in the pathway nitrogen metabolism; (S)-allantoin degradation. Catalyzes the catabolism of the allantoin degradation intermediate (S)-ureidoglycolate, generating urea and glyoxylate. Involved in the utilization of allantoin as nitrogen source. This is Ureidoglycolate lyase from Salmonella enteritidis.